Reading from the N-terminus, the 66-residue chain is Large ribosomal subunit protein bL33c (66 aa).

The protein belongs to the bacterial ribosomal protein bL33 family.

The protein resides in the plastid. It localises to the chloroplast. This is Large ribosomal subunit protein bL33c from Lotus japonicus (Lotus corniculatus var. japonicus).